The chain runs to 481 residues: ATP synthase subunit beta, chloroplastic (481 aa).

Residue G163–T170 participates in ATP binding.

The protein belongs to the ATPase alpha/beta chains family. As to quaternary structure, F-type ATPases have 2 components, CF(1) - the catalytic core - and CF(0) - the membrane proton channel. CF(1) has five subunits: alpha(3), beta(3), gamma(1), delta(1), epsilon(1). CF(0) has four main subunits: a(1), b(1), b'(1) and c(9-12).

Its subcellular location is the plastid. The protein localises to the chloroplast thylakoid membrane. The catalysed reaction is ATP + H2O + 4 H(+)(in) = ADP + phosphate + 5 H(+)(out). Produces ATP from ADP in the presence of a proton gradient across the membrane. The catalytic sites are hosted primarily by the beta subunits. The sequence is that of ATP synthase subunit beta, chloroplastic from Tupiella akineta (Green alga).